Consider the following 430-residue polypeptide: Adenylosuccinate synthetase (430 aa).

GTP contacts are provided by residues 12 to 18 (GDEGKGK) and 40 to 42 (GHT). Aspartate 13 acts as the Proton acceptor in catalysis. Mg(2+) contacts are provided by aspartate 13 and glycine 40. IMP contacts are provided by residues 13–16 (DEGK), 38–41 (NAGH), threonine 130, arginine 144, glutamine 224, threonine 239, and arginine 303. Histidine 41 serves as the catalytic Proton donor. Position 299–305 (299–305 (TVTGRKR)) interacts with substrate. GTP contacts are provided by residues arginine 305, 331-333 (KLD), and 413-415 (STS).

It belongs to the adenylosuccinate synthetase family. As to quaternary structure, homodimer. Mg(2+) serves as cofactor.

The protein localises to the cytoplasm. The catalysed reaction is IMP + L-aspartate + GTP = N(6)-(1,2-dicarboxyethyl)-AMP + GDP + phosphate + 2 H(+). It functions in the pathway purine metabolism; AMP biosynthesis via de novo pathway; AMP from IMP: step 1/2. Plays an important role in the de novo pathway of purine nucleotide biosynthesis. Catalyzes the first committed step in the biosynthesis of AMP from IMP. This is Adenylosuccinate synthetase from Paracoccus denitrificans (strain Pd 1222).